A 508-amino-acid polypeptide reads, in one-letter code: Cytochrome P450 monooxygenase aflV (508 aa).

The chain crosses the membrane as a helical span at residues 18-38; sequence LTWWFLAVGGAWIVSKIIKIL. N-linked (GlcNAc...) asparagine glycosylation is found at Asn-192, Asn-209, Asn-302, and Asn-408. Cys-453 is a binding site for heme.

The protein belongs to the cytochrome P450 family. It depends on heme as a cofactor.

The protein localises to the membrane. It participates in mycotoxin biosynthesis; aflatoxin biosynthesis. Its function is as follows. Cytochrome P450 monooxygenase; part of the gene cluster that mediates the biosynthesis of aflatoxins, a group of polyketide-derived furanocoumarins, and part of the most toxic and carcinogenic compounds among the known mycotoxins. The four major aflatoxins produced by A.parasiticus are aflatoxin B1 (AFB1), aflatoxin B2 (AFB2), aflatoxin G1 (AFG1) and aflatoxin G2 (AFG2). The role of the cytochrome P450 monooxygenase aflV in aflatoxin biosynthesis has still to be characterized. The biosynthesis of aflatoxins begins with the norsolorinic acid synthase aflC that combines a hexanoyl starter unit produced by the fatty acid synthase aflA/aflB and 7 malonyl-CoA extender units to synthesize the precursor NOR. The second step is the conversion of NOR to averantin and requires the norsolorinic acid ketoreductase aflD, which catalyzes the dehydration of norsolorinic acid to form (1'S)-averantin. The norsolorinic acid reductases aflE and aflF may also play a role in the conversion of NOR to AVN. The cytochrome P450 monooxygenase aflG then catalyzes the hydroxylation of AVN to 5'hydroxyaverantin (HAVN). The next step is performed by the 5'-hydroxyaverantin dehydrogenase aflH that transforms HAVN to 5'-oxoaverantin (OAVN) which is further converted to averufin (AVF) by aflK that plays a dual role in the pathway, as a 5'-oxoaverantin cyclase that mediates conversion of 5'-oxoaverantin, as well as a versicolorin B synthase in a later step in the pathway. The averufin oxidase aflI catalyzes the conversion of AVF to versiconal hemiacetal acetate (VHA). VHA is then the substrate for the versiconal hemiacetal acetate esterase aflJ to yield versiconal (VAL). Versicolorin B synthase aflK then converts VAL to versicolorin B (VERB) by closing the bisfuran ring of aflatoxin which is required for DNA-binding, thus giving to aflatoxin its activity as a mutagen. Then, the activity of the versicolorin B desaturase aflL leads to versicolorin A (VERA). A branch point starts from VERB since it can also be converted to dihydrodemethylsterigmatocystin (DMDHST), probably also by aflL, VERA being a precursor for aflatoxins B1 and G1, and DMDHST for aflatoxins B2 and G2. Next, the versicolorin reductase aflM and the cytochrome P450 monooxygenase aflN are involved in conversion of VERA to demethylsterigmatocystin (DMST). AflX and aflY seem also involved in this step, through probable aflX-mediated epoxide ring-opening step following versicolorin A oxidation and aflY-mediated Baeyer-Villiger oxidation required for the formation of the xanthone ring. The methyltransferase aflO then leads to the modification of DMST to sterigmatocystin (ST), and of DMDHST to dihydrosterigmatocystin (DHST). Both ST and DHST are then substrates of the O-methyltransferase aflP to yield O-methylsterigmatocystin (OMST) and dihydro-O-methylsterigmatocystin (DHOMST), respectively. Finally OMST is converted to aflatoxins B1 and G1, and DHOMST to aflatoxins B2 and G2, via the action of several enzymes including O-methylsterigmatocystin oxidoreductase aflQ, the cytochrome P450 monooxygenase aflU, but also the NADH-dependent flavin oxidoreductase nadA which is specifically required for the synthesis of AFG1. This chain is Cytochrome P450 monooxygenase aflV, found in Aspergillus parasiticus (strain ATCC 56775 / NRRL 5862 / SRRC 143 / SU-1).